A 366-amino-acid polypeptide reads, in one-letter code: Aminomethyltransferase (366 aa).

The protein belongs to the GcvT family. As to quaternary structure, the glycine cleavage system is composed of four proteins: P, T, L and H.

It catalyses the reaction N(6)-[(R)-S(8)-aminomethyldihydrolipoyl]-L-lysyl-[protein] + (6S)-5,6,7,8-tetrahydrofolate = N(6)-[(R)-dihydrolipoyl]-L-lysyl-[protein] + (6R)-5,10-methylene-5,6,7,8-tetrahydrofolate + NH4(+). Functionally, the glycine cleavage system catalyzes the degradation of glycine. The sequence is that of Aminomethyltransferase from Bacillus cytotoxicus (strain DSM 22905 / CIP 110041 / 391-98 / NVH 391-98).